The primary structure comprises 142 residues: Large ribosomal subunit protein uL11 (142 aa).

The protein belongs to the universal ribosomal protein uL11 family. Part of the ribosomal stalk of the 50S ribosomal subunit. Interacts with L10 and the large rRNA to form the base of the stalk. L10 forms an elongated spine to which L12 dimers bind in a sequential fashion forming a multimeric L10(L12)X complex. Post-translationally, one or more lysine residues are methylated.

In terms of biological role, forms part of the ribosomal stalk which helps the ribosome interact with GTP-bound translation factors. The chain is Large ribosomal subunit protein uL11 from Haemophilus influenzae (strain 86-028NP).